Reading from the N-terminus, the 424-residue chain is Histidine--tRNA ligase (424 aa).

This sequence belongs to the class-II aminoacyl-tRNA synthetase family. As to quaternary structure, homodimer.

Its subcellular location is the cytoplasm. It carries out the reaction tRNA(His) + L-histidine + ATP = L-histidyl-tRNA(His) + AMP + diphosphate + H(+). In Francisella philomiragia subsp. philomiragia (strain ATCC 25017 / CCUG 19701 / FSC 153 / O#319-036), this protein is Histidine--tRNA ligase.